The following is a 178-amino-acid chain: Crossover junction endodeoxyribonuclease RuvC (178 aa).

Catalysis depends on residues aspartate 14, glutamate 73, and aspartate 145. Mg(2+) contacts are provided by aspartate 14, glutamate 73, and aspartate 145.

This sequence belongs to the RuvC family. Homodimer which binds Holliday junction (HJ) DNA. The HJ becomes 2-fold symmetrical on binding to RuvC with unstacked arms; it has a different conformation from HJ DNA in complex with RuvA. In the full resolvosome a probable DNA-RuvA(4)-RuvB(12)-RuvC(2) complex forms which resolves the HJ. The cofactor is Mg(2+).

It localises to the cytoplasm. The enzyme catalyses Endonucleolytic cleavage at a junction such as a reciprocal single-stranded crossover between two homologous DNA duplexes (Holliday junction).. In terms of biological role, the RuvA-RuvB-RuvC complex processes Holliday junction (HJ) DNA during genetic recombination and DNA repair. Endonuclease that resolves HJ intermediates. Cleaves cruciform DNA by making single-stranded nicks across the HJ at symmetrical positions within the homologous arms, yielding a 5'-phosphate and a 3'-hydroxyl group; requires a central core of homology in the junction. The consensus cleavage sequence is 5'-(A/T)TT(C/G)-3'. Cleavage occurs on the 3'-side of the TT dinucleotide at the point of strand exchange. HJ branch migration catalyzed by RuvA-RuvB allows RuvC to scan DNA until it finds its consensus sequence, where it cleaves and resolves the cruciform DNA. The polypeptide is Crossover junction endodeoxyribonuclease RuvC (Nitrosomonas eutropha (strain DSM 101675 / C91 / Nm57)).